The primary structure comprises 184 residues: ATP synthase subunit b, chloroplastic (184 aa).

The helical transmembrane segment at 29–49 (INIINLGIVIGLLVYLGEGVL) threads the bilayer.

It belongs to the ATPase B chain family. In terms of assembly, F-type ATPases have 2 components, F(1) - the catalytic core - and F(0) - the membrane proton channel. F(1) has five subunits: alpha(3), beta(3), gamma(1), delta(1), epsilon(1). F(0) has four main subunits: a(1), b(1), b'(1) and c(10-14). The alpha and beta chains form an alternating ring which encloses part of the gamma chain. F(1) is attached to F(0) by a central stalk formed by the gamma and epsilon chains, while a peripheral stalk is formed by the delta, b and b' chains.

Its subcellular location is the plastid. The protein resides in the chloroplast thylakoid membrane. In terms of biological role, f(1)F(0) ATP synthase produces ATP from ADP in the presence of a proton or sodium gradient. F-type ATPases consist of two structural domains, F(1) containing the extramembraneous catalytic core and F(0) containing the membrane proton channel, linked together by a central stalk and a peripheral stalk. During catalysis, ATP synthesis in the catalytic domain of F(1) is coupled via a rotary mechanism of the central stalk subunits to proton translocation. Functionally, component of the F(0) channel, it forms part of the peripheral stalk, linking F(1) to F(0). The chain is ATP synthase subunit b, chloroplastic from Psilotum nudum (Whisk fern).